We begin with the raw amino-acid sequence, 388 residues long: S-adenosylmethionine synthase (388 aa).

His16 is an ATP binding site. A Mg(2+)-binding site is contributed by Asp18. Residue Glu44 participates in K(+) binding. Glu57 and Gln100 together coordinate L-methionine. The segment at 100–110 (QSPDIAQGVDK) is flexible loop. ATP contacts are provided by residues 167–169 (DAK), 233–234 (RF), Asp242, 248–249 (RK), Ala265, and Lys269. Asp242 contributes to the L-methionine binding site. Residue Lys273 participates in L-methionine binding.

Belongs to the AdoMet synthase family. In terms of assembly, homotetramer; dimer of dimers. Requires Mg(2+) as cofactor. It depends on K(+) as a cofactor.

Its subcellular location is the cytoplasm. The catalysed reaction is L-methionine + ATP + H2O = S-adenosyl-L-methionine + phosphate + diphosphate. Its pathway is amino-acid biosynthesis; S-adenosyl-L-methionine biosynthesis; S-adenosyl-L-methionine from L-methionine: step 1/1. Catalyzes the formation of S-adenosylmethionine (AdoMet) from methionine and ATP. The overall synthetic reaction is composed of two sequential steps, AdoMet formation and the subsequent tripolyphosphate hydrolysis which occurs prior to release of AdoMet from the enzyme. The sequence is that of S-adenosylmethionine synthase from Polynucleobacter asymbioticus (strain DSM 18221 / CIP 109841 / QLW-P1DMWA-1) (Polynucleobacter necessarius subsp. asymbioticus).